Consider the following 491-residue polypeptide: Ketol-acid reductoisomerase (NADP(+)) (491 aa).

A KARI N-terminal Rossmann domain is found at 15-208 (AQLGKCRFMG…GGHRAGVLES (194 aa)). Residues 45–48 (CGAQ), Arg68, Arg76, Ser78, and 108–110 (DKQ) each bind NADP(+). Residue His132 is part of the active site. Gly158 contributes to the NADP(+) binding site. 2 consecutive KARI C-terminal knotted domains span residues 209–344 (SFVA…TAPQ) and 345–484 (YEGK…MTDM). The Mg(2+) site is built by Asp217, Glu221, Glu389, and Glu393. Ser414 contacts substrate.

This sequence belongs to the ketol-acid reductoisomerase family. Mg(2+) is required as a cofactor.

The catalysed reaction is (2R)-2,3-dihydroxy-3-methylbutanoate + NADP(+) = (2S)-2-acetolactate + NADPH + H(+). It carries out the reaction (2R,3R)-2,3-dihydroxy-3-methylpentanoate + NADP(+) = (S)-2-ethyl-2-hydroxy-3-oxobutanoate + NADPH + H(+). The protein operates within amino-acid biosynthesis; L-isoleucine biosynthesis; L-isoleucine from 2-oxobutanoate: step 2/4. Its pathway is amino-acid biosynthesis; L-valine biosynthesis; L-valine from pyruvate: step 2/4. Functionally, involved in the biosynthesis of branched-chain amino acids (BCAA). Catalyzes an alkyl-migration followed by a ketol-acid reduction of (S)-2-acetolactate (S2AL) to yield (R)-2,3-dihydroxy-isovalerate. In the isomerase reaction, S2AL is rearranged via a Mg-dependent methyl migration to produce 3-hydroxy-3-methyl-2-ketobutyrate (HMKB). In the reductase reaction, this 2-ketoacid undergoes a metal-dependent reduction by NADPH to yield (R)-2,3-dihydroxy-isovalerate. This Escherichia coli (strain 55989 / EAEC) protein is Ketol-acid reductoisomerase (NADP(+)).